Reading from the N-terminus, the 228-residue chain is GDT1-like protein 5 (228 aa).

Glycine 2 carries the post-translational modification N-acetylglycine. 6 consecutive transmembrane segments (helical) span residues 12-32, 39-59, 71-91, 133-153, 173-193, and 205-225; these read LAMT…AILA, LVLA…ATLG, THHI…WDGF, PFLT…NFFG, LGVV…AVLG, and IVAL…LLTP.

This sequence belongs to the GDT1 family.

It is found in the membrane. The polypeptide is GDT1-like protein 5 (Arabidopsis thaliana (Mouse-ear cress)).